We begin with the raw amino-acid sequence, 131 residues long: Classical arabinogalactan protein 2 (131 aa).

The signal sequence occupies residues 1–21; the sequence is MNSKAMQALIFLGFLATSCLA. Gln22 is subject to Pyrrolidone carboxylic acid. 4-hydroxyproline occurs at positions 24, 26, 28, 34, and 35. O-linked (Ara...) hydroxyproline glycans are attached at residues Pro24, Pro26, Pro28, Pro34, and Pro35. Positions 24 to 106 are disordered; the sequence is PAPAPTTVTP…PGPDGAADAP (83 aa). Composition is skewed to pro residues over residues 25–38 and 49–64; these read APAP…PTAL and IASP…PAPT. Composition is skewed to low complexity over residues 65-76 and 90-106; these read TSPTTSPVASPP and TPTS…ADAP. The GPI-anchor amidated serine moiety is linked to residue Ser107. The propeptide at 108–131 is removed in mature form; sequence AAWANKAFLVGTAVAGALYAVVLA.

The protein belongs to the classical AGP family. In terms of processing, O-glycosylated on hydroxyprolines; noncontiguous hydroxylproline residues are glycosylated with arabinogalactan.

The protein localises to the cell membrane. Functionally, proteoglycan that seems to be implicated in diverse developmental roles such as differentiation, cell-cell recognition, embryogenesis and programmed cell death. This is Classical arabinogalactan protein 2 (AGP2) from Arabidopsis thaliana (Mouse-ear cress).